The primary structure comprises 268 residues: Undecaprenyl-diphosphatase (268 aa).

8 helical membrane passes run 1–21, 39–59, 85–105, 110–130, 144–164, 187–207, 221–241, and 247–267; these read MSLI…FLPI, QGPL…LVYF, ALLV…LVAF, ALRS…PLWL, MSFK…IPGA, FSML…LIEL, DGLI…AVLM, and IGFL…LVFF.

This sequence belongs to the UppP family.

The protein resides in the cell inner membrane. It carries out the reaction di-trans,octa-cis-undecaprenyl diphosphate + H2O = di-trans,octa-cis-undecaprenyl phosphate + phosphate + H(+). Functionally, catalyzes the dephosphorylation of undecaprenyl diphosphate (UPP). Confers resistance to bacitracin. The sequence is that of Undecaprenyl-diphosphatase from Maricaulis maris (strain MCS10) (Caulobacter maris).